The following is a 288-amino-acid chain: Quinate/shikimate dehydrogenase (288 aa).

Residues lysine 71 and aspartate 107 each contribute to the substrate site. Residues 132–135, 155–158, lysine 205, 232–235, and glycine 255 contribute to the NAD(+) site; these read AGGA, NRRD, and CVYN.

It belongs to the shikimate dehydrogenase family. In terms of assembly, homodimer.

The enzyme catalyses L-quinate + NAD(+) = 3-dehydroquinate + NADH + H(+). It catalyses the reaction L-quinate + NADP(+) = 3-dehydroquinate + NADPH + H(+). The catalysed reaction is shikimate + NADP(+) = 3-dehydroshikimate + NADPH + H(+). It carries out the reaction shikimate + NAD(+) = 3-dehydroshikimate + NADH + H(+). It participates in metabolic intermediate biosynthesis; chorismate biosynthesis; chorismate from D-erythrose 4-phosphate and phosphoenolpyruvate: step 4/7. The actual biological function of YdiB remains unclear, nor is it known whether 3-dehydroshikimate or quinate represents the natural substrate. Catalyzes the reversible NAD-dependent reduction of both 3-dehydroshikimate (DHSA) and 3-dehydroquinate to yield shikimate (SA) and quinate, respectively. It can use both NAD or NADP for catalysis, however it has higher catalytic efficiency with NAD. In Shigella flexneri, this protein is Quinate/shikimate dehydrogenase.